The following is a 212-amino-acid chain: ER lumen protein-retaining receptor 2 (212 aa).

Residues 1–4 (MNIF) are Lumenal-facing. Residues 5-24 (RLTGDLSHLAAIIILLLKIW) traverse the membrane as a helical segment. Topologically, residues 25–32 (KSRSCAGI) are cytoplasmic. Residues 33–52 (SGKSQILFALVFTTRYLDLL) form a helical membrane-spanning segment. The interval 47-48 (RY) is interaction with the K-D-E-L motif on target proteins. Residues 53 to 58 (TSFISL) lie on the Lumenal side of the membrane. A helical membrane pass occupies residues 59–79 (YNTCMKVIYIGCAYATVYLIY). At 80–92 (AKFRATYDGNHDT) the chain is on the cytoplasmic side. Residues 93–110 (FRAEFLVVPVGGLAFLVN) form a helical membrane-spanning segment. The Lumenal portion of the chain corresponds to 111-116 (HDFSPL). The helical transmembrane segment at 117 to 135 (EILWTFSIYLESVAILPQL) threads the bilayer. Topologically, residues 136-149 (FMISKTGEAETITT) are cytoplasmic. A helical membrane pass occupies residues 150 to 168 (HYLFCLGVYRALYLFNWIW). The interaction with the K-D-E-L motif on target proteins stretch occupies residues 159 to 169 (RALYLFNWIWR). The Lumenal portion of the chain corresponds to 169-178 (RFYFEGFFDM). A helical transmembrane segment spans residues 179-199 (IAIVAGVVQTILYCDFFYLYV). Residues 200 to 212 (TKVLKGKKLSLPA) lie on the Cytoplasmic side of the membrane. The tract at residues 204-207 (KGKK) is important for recycling of cargo proteins with the sequence motif K-D-E-L from the Golgi to the endoplasmic reticulum.

It belongs to the ERD2 family.

It localises to the endoplasmic reticulum membrane. The protein resides in the golgi apparatus membrane. The protein localises to the cytoplasmic vesicle. Its subcellular location is the COPI-coated vesicle membrane. Functionally, receptor for the C-terminal sequence motif K-D-E-L that is present on endoplasmic reticulum resident proteins and that mediates their recycling from the Golgi back to the endoplasmic reticulum. Binding is pH dependent, and is optimal at pH 5-5.4. In Danio rerio (Zebrafish), this protein is ER lumen protein-retaining receptor 2 (kdelr2).